A 257-amino-acid polypeptide reads, in one-letter code: Nickel import system ATP-binding protein NikD (257 aa).

One can recognise an ABC transporter domain in the interval 4–245; that stretch reads IDIQNLTIKN…HLHPYTEQLI (242 aa). ATP is bound at residue 37-44; it reads GESGAGKS.

Belongs to the ABC transporter superfamily. The complex is composed of two ATP-binding proteins (NikD and NikE), two transmembrane proteins (NikB and NikC) and a solute-binding protein (NikA).

It is found in the cell membrane. It catalyses the reaction Ni(2+)(out) + ATP + H2O = Ni(2+)(in) + ADP + phosphate + H(+). Part of the ABC transporter complex NikABCDE (Opp2) involved in nickel import. Probably responsible for energy coupling to the transport system. This Staphylococcus aureus (strain bovine RF122 / ET3-1) protein is Nickel import system ATP-binding protein NikD.